We begin with the raw amino-acid sequence, 465 residues long: Argininosuccinate lyase (465 aa).

It belongs to the lyase 1 family. Argininosuccinate lyase subfamily.

It is found in the cytoplasm. The catalysed reaction is 2-(N(omega)-L-arginino)succinate = fumarate + L-arginine. Its pathway is amino-acid biosynthesis; L-arginine biosynthesis; L-arginine from L-ornithine and carbamoyl phosphate: step 3/3. This is Argininosuccinate lyase from Clostridium botulinum (strain Alaska E43 / Type E3).